Here is a 594-residue protein sequence, read N- to C-terminus: Capsid vertex component 1 (594 aa).

Disordered regions lie at residues 52-77 (GRST…DAVG), 176-205 (NKRD…NGSD), 443-468 (ARRQ…SGPP), and 575-594 (GRQE…FDDL). A compositionally biased stretch (acidic residues) spans 61–76 (GDEDDAPASDDAEDAV).

This sequence belongs to the herpesviridae CVC1 protein family. In terms of assembly, interacts (via C-terminus) with capsid vertex component 2/CVC2.

It is found in the virion. The protein resides in the host nucleus. In terms of biological role, capsid vertex-specific component that plays a role during viral DNA encapsidation, assuring correct genome cleavage and presumably stabilizing capsids that contain full-length viral genomes. The polypeptide is Capsid vertex component 1 (Homo sapiens (Human)).